The chain runs to 278 residues: Pantothenate synthetase (278 aa).

An ATP-binding site is contributed by Met-26 to His-33. His-33 functions as the Proton donor in the catalytic mechanism. (R)-pantoate is bound at residue Gln-57. Gln-57 provides a ligand contact to beta-alanine. An ATP-binding site is contributed by Gly-144 to Asp-147. (R)-pantoate is bound at residue Gln-150. ATP-binding positions include Gly-173 and Leu-181–Arg-184.

Belongs to the pantothenate synthetase family. As to quaternary structure, homodimer.

It is found in the cytoplasm. It catalyses the reaction (R)-pantoate + beta-alanine + ATP = (R)-pantothenate + AMP + diphosphate + H(+). The protein operates within cofactor biosynthesis; (R)-pantothenate biosynthesis; (R)-pantothenate from (R)-pantoate and beta-alanine: step 1/1. Its function is as follows. Catalyzes the condensation of pantoate with beta-alanine in an ATP-dependent reaction via a pantoyl-adenylate intermediate. In Neisseria meningitidis serogroup C / serotype 2a (strain ATCC 700532 / DSM 15464 / FAM18), this protein is Pantothenate synthetase.